We begin with the raw amino-acid sequence, 2547 residues long: Lovastatin diketide synthase mokB (2547 aa).

The Ketosynthase family 3 (KS3) domain maps to 10 to 430; it reads PTPIAVVGMG…GANAHAIVER (421 aa). Catalysis depends on for beta-ketoacyl synthase activity residues Cys183, His318, and His353. Residues 545–890 form an acyl and malonyl transferase region; the sequence is VFTGQGAQWF…MDLLQGGYPV (346 aa). The active-site For malonyltransferase activity is the Ser635. Residues 941–1079 are N-terminal hotdog fold; that stretch reads HDLIGVQEPL…GLIRAQVDHP (139 aa). Residues 941-1252 form the PKS/mFAS DH domain; sequence HDLIGVQEPL…FQSLGAVISD (312 aa). The active-site Proton acceptor; for dehydratase activity is His973. A dehydratase-like region spans residues 973-985; sequence HVVGSRILFPGAG. A C-terminal hotdog fold region spans residues 1095-1252; the sequence is SRKMAPQDLW…FQSLGAVISD (158 aa). Asp1160 serves as the catalytic Proton donor; for dehydratase activity. Cys1340 and Cys1379 are disulfide-bonded. The segment at 1510-1547 is methyltransferase; that stretch reads YDVVLACQVLHATSNMQRTLNNVRKLLKPGGKLILVET. The Carrier domain occupies 2459 to 2541; sequence ASTEEEATAL…EVAEVVVKKY (83 aa). O-(pantetheine 4'-phosphoryl)serine is present on Ser2501.

The cofactor is pantetheine 4'-phosphate.

It catalyses the reaction holo-[2-methylbutanoate polyketide synthase] + 2 malonyl-CoA + S-adenosyl-L-methionine + 2 NADPH + 3 H(+) = (S)-2-methylbutanoyl-[2-methylbutanoate polyketide synthase] + S-adenosyl-L-homocysteine + 2 CO2 + 2 NADP(+) + 2 CoA + H2O. The protein operates within polyketide biosynthesis; lovastatin biosynthesis. Its function is as follows. Diketide synthase; part of the gene cluster that mediates the biosynthesis of monakolin K, also known as lovastatin, and which acts as a potent competitive inhibitor of HMG-CoA reductase. Monakolin K biosynthesis is performed in two stages. The first stage is catalyzed by the nonaketide synthase mokA, which belongs to type I polyketide synthases and catalyzes the iterative nine-step formation of the polyketide. This PKS stage completed by the action of dehydrogenase mokE, which catalyzes the NADPH-dependent reduction of the unsaturated tetra-, penta- and heptaketide intermediates that arise during the mokA-mediated biosynthesis of the nonaketide chain and leads to dihydromonacolin L. Covalently bound dihydromonacolin L is released from mokA by the mokD esterase. Conversion of dihydromonacolin L into monacolin L and then monacolin J is subsequently performed with the participation of molecular oxygen and P450 monoogygenase mokC. Finally, mokF performs the conversion of monacoline J to monacoline K through the addition of the side-chain diketide moiety (2R)-2-methylbutanoate produced by the diketide synthase mokB. This chain is Lovastatin diketide synthase mokB, found in Monascus pilosus (Red mold).